The chain runs to 131 residues: Translation initiation factor 5A (131 aa).

Lys37 is subject to Hypusine.

It belongs to the eIF-5A family.

The protein resides in the cytoplasm. In terms of biological role, functions by promoting the formation of the first peptide bond. In Methanococcus maripaludis (strain DSM 14266 / JCM 13030 / NBRC 101832 / S2 / LL), this protein is Translation initiation factor 5A.